The primary structure comprises 240 residues: UDP-2,3-diacylglucosamine hydrolase (240 aa).

Residues aspartate 8, histidine 10, aspartate 41, asparagine 79, and histidine 114 each coordinate Mn(2+). Residue 79–80 (NR) participates in substrate binding. The substrate site is built by aspartate 122, serine 160, asparagine 164, lysine 167, and histidine 195. 2 residues coordinate Mn(2+): histidine 195 and histidine 197.

The protein belongs to the LpxH family. Requires Mn(2+) as cofactor.

Its subcellular location is the cell inner membrane. The enzyme catalyses UDP-2-N,3-O-bis[(3R)-3-hydroxytetradecanoyl]-alpha-D-glucosamine + H2O = 2-N,3-O-bis[(3R)-3-hydroxytetradecanoyl]-alpha-D-glucosaminyl 1-phosphate + UMP + 2 H(+). It participates in glycolipid biosynthesis; lipid IV(A) biosynthesis; lipid IV(A) from (3R)-3-hydroxytetradecanoyl-[acyl-carrier-protein] and UDP-N-acetyl-alpha-D-glucosamine: step 4/6. Hydrolyzes the pyrophosphate bond of UDP-2,3-diacylglucosamine to yield 2,3-diacylglucosamine 1-phosphate (lipid X) and UMP by catalyzing the attack of water at the alpha-P atom. Involved in the biosynthesis of lipid A, a phosphorylated glycolipid that anchors the lipopolysaccharide to the outer membrane of the cell. The sequence is that of UDP-2,3-diacylglucosamine hydrolase from Escherichia coli O6:K15:H31 (strain 536 / UPEC).